The chain runs to 240 residues: uncharacterized protein (240 aa).

2 disordered regions span residues 99–121 (EPPTVSAPPPPSQFSDEPTSPEL) and 136–167 (ATVSSPTSPRPITTESSRVSPTKEKWGRKRVH). Residues 137 to 155 (TVSSPTSPRPITTESSRVS) show a composition bias toward polar residues.

This is an uncharacterized protein from Ictaluridae (bullhead catfishes).